Here is an 822-residue protein sequence, read N- to C-terminus: Adhesion G protein-coupled receptor E2 (822 aa).

Residues 1–18 form the signal peptide; it reads MGGRVFLAFCVWLTLLGA. Residues 19–530 are Extracellular-facing; sequence ETQDSRDCAR…DVQEEDPVLT (512 aa). Residues 22–63 enclose the EGF-like 1 domain; that stretch reads DSRDCARWCPENSSCVNATACRCNPGFSSSSEIFTSPTEICD. 5 disulfides stabilise this stretch: Cys26/Cys36, Cys30/Cys42, Cys44/Cys62, Cys68/Cys82, and Cys76/Cys91. Asn33 and Asn38 each carry an N-linked (GlcNAc...) asparagine glycan. The EGF-like 1; calcium-binding domain maps to 64-103; sequence DINECVPPSKVSCGKSSDCRNTEGSYDCVCNPGYELVSGA. Asn108 carries an N-linked (GlcNAc...) asparagine glycan. One can recognise an EGF-like 2; calcium-binding domain in the interval 116-159; it reads DVDECQQNPRLCKSYGTCVNTLGSFTCQCLPGFKFKPEDPKLCT. Intrachain disulfides connect Cys120–Cys133, Cys127–Cys142, Cys144–Cys158, Cys164–Cys177, and Cys171–Cys186. An EGF-like 3; calcium-binding domain is found at 160–198; the sequence is DVNECTSGQNPCHSSTHCLNNVGSYQCRCRPGWQPIPGS. Asn203, Asn222, Asn351, Asn371, Asn427, Asn449, and Asn453 each carry an N-linked (GlcNAc...) asparagine glycan. An EGF-like 4; calcium-binding domain is found at 209-247; it reads DVDECSSGLHQCDNSTVCFNTVGSYTCRCRPGWEPKHGI. 2 disulfides stabilise this stretch: Cys213–Cys226 and Cys220–Cys235. The GAIN-B domain occupies 351–523; it reads NFSYPAGTEF…AVLMAPYDVQ (173 aa). 2 disulfide bridges follow: Cys475–Cys505 and Cys493–Cys507. Residues 475–523 form a GPS region; sequence CVFWEHGQNGCGHWATTGCSTMDTRDTSTICRCTHLSSFAVLMAPYDVQ. Residues 531–551 form a helical membrane-spanning segment; that stretch reads VITYMGLSLSLLCLLLAALTF. Residues 552–562 are Cytoplasmic-facing; the sequence is LLCKAIQNIST. A helical transmembrane segment spans residues 563–583; it reads SLHLQLSLCLLLAHLLFLVAI. The Extracellular segment spans residues 584-589; that stretch reads DRTEHE. Residues 590-610 traverse the membrane as a helical segment; the sequence is VLCAIIASALHYLYLAAFTWM. Topologically, residues 611–637 are cytoplasmic; that stretch reads LLEALYLFLTARNLMVVNYSSINRFTK. The chain crosses the membrane as a helical span at residues 638–658; that stretch reads KLMFPVAYGVPAVTVAISAAS. Residues 659-676 lie on the Extracellular side of the membrane; that stretch reads RPHLYGTPSRCWLQPEKG. Residues 677–697 traverse the membrane as a helical segment; that stretch reads FIWGFLGPVCAIFSVNLALLL. The Cytoplasmic segment spans residues 698-728; sequence VTLWILKNRLSSLNNEVSTLQNTRMLAFKAT. A helical transmembrane segment spans residues 729 to 749; that stretch reads AQLFILGCTWCLGILQVGPAA. The Extracellular segment spans residues 750–753; it reads RVMA. A helical membrane pass occupies residues 754 to 774; sequence YLFTIINSLQGVFIFLVYCLL. Over 775–822 the chain is Cytoplasmic; the sequence is SQQVREQYRKWSKGFRKLRTESEMHTLSSSAKRDTPKPSTPGLLGLQS. The segment at 797–822 is disordered; sequence EMHTLSSSAKRDTPKPSTPGLLGLQS.

The protein belongs to the G-protein coupled receptor 2 family. Adhesion G-protein coupled receptor (ADGR) subfamily. As to quaternary structure, forms a heterodimer, consisting of a large extracellular region non-covalently linked to a seven-transmembrane moiety. Interacts with chondroitin sulfate; the interaction with chondroitin sulfate is calcium-dependent. Interacts with CD55. Post-translationally, autoproteolytically cleaved into 2 subunits, an extracellular alpha subunit and a seven-transmembrane beta subunit.

Its subcellular location is the cell membrane. The protein localises to the cell projection. It is found in the ruffle membrane. Its function is as follows. Cell surface receptor that binds to the chondroitin sulfate moiety of glycosaminoglycan chains and promotes cell attachment. Promotes granulocyte chemotaxis, degranulation and adhesion. In macrophages, promotes the release of inflammatory cytokines, including IL8 and TNF. Signals probably through G-proteins. The polypeptide is Adhesion G protein-coupled receptor E2 (ADGRE2) (Macaca mulatta (Rhesus macaque)).